The sequence spans 372 residues: Small ribosomal subunit protein mS77 (rPPR2) (372 aa).

Residues 1–28 (MKSFLLSRQAIHRISLLSSKTPTFCRNF) constitute a mitochondrion transit peptide. Residues 240–265 (DNSIRESETVDGEVEEEGFVPSDEVE) are disordered. Over residues 248-257 (TVDGEVEEEG) the composition is skewed to acidic residues.

In terms of assembly, component of the mitochondrial ribosome small subunit.

It is found in the mitochondrion. In terms of biological role, required for karyogamy during female gametophyte development, when the two polar nuclei fuse to form the diploid central cell nucleus. This is Small ribosomal subunit protein mS77 (rPPR2) from Arabidopsis thaliana (Mouse-ear cress).